The chain runs to 321 residues: Sideroflexin-3 (321 aa).

Met1 carries the N-acetylmethionine modification. The next 4 membrane-spanning stretches (helical) occupy residues 146 to 164 (LGTAYVSATTGAVATALGL), 174 to 194 (LVGRFVPFAAVAAANCINIPL), 225 to 245 (IFQVVVSRIGMAIPAMAIPPV), and 266 to 286 (LQVGLVGFCLVFATPLCCALF).

The protein belongs to the sideroflexin family.

The protein resides in the mitochondrion membrane. The catalysed reaction is L-serine(in) = L-serine(out). In terms of biological role, mitochondrial serine transporter that mediates transport of serine into mitochondria, an important step of the one-carbon metabolism pathway. Mitochondrial serine is converted to glycine and formate, which then exits to the cytosol where it is used to generate the charged folates that serve as one-carbon donors. The polypeptide is Sideroflexin-3 (Sfxn3) (Rattus norvegicus (Rat)).